The primary structure comprises 335 residues: Glyceraldehyde-3-phosphate dehydrogenase 2 (335 aa).

NAD(+)-binding positions include 13–14 (TI) and Gly-111. 140-142 (SCN) lines the D-glyceraldehyde 3-phosphate pocket. Cys-141 serves as the catalytic Nucleophile. NAD(+) is bound at residue Arg-169. D-glyceraldehyde 3-phosphate-binding positions include Thr-171 and 195-196 (HG). Residue Gln-300 participates in NAD(+) binding.

It belongs to the glyceraldehyde-3-phosphate dehydrogenase family. In terms of assembly, homotetramer.

The protein resides in the cytoplasm. The enzyme catalyses D-glyceraldehyde 3-phosphate + phosphate + NADP(+) = (2R)-3-phospho-glyceroyl phosphate + NADPH + H(+). It carries out the reaction D-glyceraldehyde 3-phosphate + phosphate + NAD(+) = (2R)-3-phospho-glyceroyl phosphate + NADH + H(+). It participates in carbohydrate degradation; glycolysis; pyruvate from D-glyceraldehyde 3-phosphate: step 1/5. In Methanosarcina acetivorans (strain ATCC 35395 / DSM 2834 / JCM 12185 / C2A), this protein is Glyceraldehyde-3-phosphate dehydrogenase 2 (gapB).